Here is a 221-residue protein sequence, read N- to C-terminus: Urease accessory protein UreF (221 aa).

Belongs to the UreF family. As to quaternary structure, ureD, UreF and UreG form a complex that acts as a GTP-hydrolysis-dependent molecular chaperone, activating the urease apoprotein by helping to assemble the nickel containing metallocenter of UreC. The UreE protein probably delivers the nickel.

The protein resides in the cytoplasm. In terms of biological role, required for maturation of urease via the functional incorporation of the urease nickel metallocenter. The chain is Urease accessory protein UreF from Aliivibrio fischeri (strain ATCC 700601 / ES114) (Vibrio fischeri).